The sequence spans 517 residues: Cytochrome b mRNA maturase bI3 (517 aa).

Topologically, residues 1–31 are mitochondrial matrix; it reads MAFRKSNVYLSLVNSYIIDSPQPSSINYWWN. A cytochrome b region spans residues 1-169; sequence MAFRKSNVYL…DIVSWLWGGF (169 aa). A helical transmembrane segment spans residues 32–52; the sequence is MGSLLGLCLVIQIVTGIFMAM. Residues 53–84 are Mitochondrial intermembrane-facing; it reads HYSSNIELAFSSVEHIMRDVHNGYILRYLHAN. The chain crosses the membrane as a helical span at residues 85-105; the sequence is GASFFFMVMFMHMAKGLYYGS. Topologically, residues 106–115 are mitochondrial matrix; that stretch reads YRSPRVTLWN. A helical membrane pass occupies residues 116-136; the sequence is VGVIIFILTIATAFLGYCCVY. Topologically, residues 137–145 are mitochondrial intermembrane; it reads GQMSHWGAT. A helical transmembrane segment spans residues 146 to 166; sequence VITNLFSAIPFVGNDIVSWLW. The Mitochondrial matrix portion of the chain corresponds to 167–184; it reads GGFNMEDPYYSNMMLNKS. Positions 170-517 are maturase; the sequence is NMEDPYYSNM…NNYFKIPPKY (348 aa). The helical transmembrane segment at 185–205 threads the bilayer; it reads VLCWNIFIWMMNYYIIQLIIY. Residues 206-224 lie on the Mitochondrial intermembrane side of the membrane; sequence NNMIWNKNNMVKMFIMRRK. The chain crosses the membrane as a helical span at residues 225–242; sequence LAVINMYMYMKLIIQRTY. Residues 243 to 517 are Mitochondrial matrix-facing; that stretch reads SYYMNNTIIY…NNYFKIPPKY (275 aa).

In the N-terminal section; belongs to the cytochrome b family. This sequence in the C-terminal section; belongs to the LAGLIDADG endonuclease family. As to quaternary structure, forms a ribonucleoprotein complex composed of maturase bI3 and 2 dimers of MRS1 that assemble around the bI3 RNA.

It localises to the mitochondrion inner membrane. Functionally, mitochondrial mRNA maturase required for splicing of intron 3 of the cytochrome b (COB) gene, containing its own coding sequence. In vivo splicing requires the formation of a ribonucleoprotein complex together with the imported mitochondrial RNA-splicing protein MRS1. The complex seems to stimulate the intrinsic ribozyme activity of intron bI3 through binding to and stabilizing specific secondary and tertiary structure elements in the RNA. In Saccharomyces cerevisiae (strain ATCC 204508 / S288c) (Baker's yeast), this protein is Cytochrome b mRNA maturase bI3 (BI3).